Here is a 429-residue protein sequence, read N- to C-terminus: Argininosuccinate lyase (429 aa).

Belongs to the lyase 1 family. Argininosuccinate lyase subfamily.

It localises to the cytoplasm. It catalyses the reaction 2-(N(omega)-L-arginino)succinate = fumarate + L-arginine. It functions in the pathway amino-acid biosynthesis; L-arginine biosynthesis; L-arginine from L-ornithine and carbamoyl phosphate: step 3/3. This chain is Argininosuccinate lyase, found in Pyrobaculum calidifontis (strain DSM 21063 / JCM 11548 / VA1).